Consider the following 289-residue polypeptide: MQIPRSVGTHDGSFHADEVTACALLIMFDLVDKDKIIRTRDSEKLAQCEYVCDVGGRYSIADKRFDHHQVSYTGSWSSAGMVLDYLHHLGSLPHEEYEYLNSTLVHGVDEQDNGRFFSKEGFCSFSDIIKIYNPLEEGGNTDKEFFFALHFAIDLLTRLREKFRYDRICRDVVKQVMEKEDVCLRFDRPLAWQENFFSLGGENHPAAFVSFPCSDQWILRGIPPTLDRRMEVRIPFPEDWAGLLGDQLVKATGIPGAIFCHKGLFLSVWDSRESCEEALNLVLKQQGVV.

It belongs to the MYG1 family.

This is MYG1 protein TC_0665 from Chlamydia muridarum (strain MoPn / Nigg).